The sequence spans 760 residues: NAD(P)H-quinone oxidoreductase subunit 5, chloroplastic (760 aa).

The next 16 helical transmembrane spans lie at 9–29, 39–59, 89–109, 125–145, 147–167, 185–205, 221–241, 260–280, 282–302, 329–349, 356–376, 398–418, 429–449, 556–576, 620–640, and 734–754; these read WIIS…LLLF, IWAF…IDLF, IDPL…LVLV, FVYM…SNLI, IYIF…FWFT, GDFG…SFEF, NEVH…GAIA, TPIS…FLVA, LLPL…IGII, LGYT…FHLI, ALLF…VGYS, IAFL…CFWS, YSPI…FYMF, ILFP…IGIP, FSVS…KPIY, and FYLL…SSIF.

The protein belongs to the complex I subunit 5 family. In terms of assembly, NDH is composed of at least 16 different subunits, 5 of which are encoded in the nucleus.

The protein resides in the plastid. It is found in the chloroplast thylakoid membrane. The catalysed reaction is a plastoquinone + NADH + (n+1) H(+)(in) = a plastoquinol + NAD(+) + n H(+)(out). The enzyme catalyses a plastoquinone + NADPH + (n+1) H(+)(in) = a plastoquinol + NADP(+) + n H(+)(out). Its function is as follows. NDH shuttles electrons from NAD(P)H:plastoquinone, via FMN and iron-sulfur (Fe-S) centers, to quinones in the photosynthetic chain and possibly in a chloroplast respiratory chain. The immediate electron acceptor for the enzyme in this species is believed to be plastoquinone. Couples the redox reaction to proton translocation, and thus conserves the redox energy in a proton gradient. This Populus trichocarpa (Western balsam poplar) protein is NAD(P)H-quinone oxidoreductase subunit 5, chloroplastic (ndhF).